The sequence spans 378 residues: tRNA-specific 2-thiouridylase MnmA (378 aa).

Residues G12–S19 and M38 contribute to the ATP site. The interaction with target base in tRNA stretch occupies residues N98–D100. C103 acts as the Nucleophile in catalysis. Cysteines 103 and 201 form a disulfide. G127 is a binding site for ATP. The interval K151–Q153 is interaction with tRNA. C201 (cysteine persulfide intermediate) is an active-site residue. An interaction with tRNA region spans residues R319 to Y320.

Belongs to the MnmA/TRMU family.

It is found in the cytoplasm. It carries out the reaction S-sulfanyl-L-cysteinyl-[protein] + uridine(34) in tRNA + AH2 + ATP = 2-thiouridine(34) in tRNA + L-cysteinyl-[protein] + A + AMP + diphosphate + H(+). Functionally, catalyzes the 2-thiolation of uridine at the wobble position (U34) of tRNA, leading to the formation of s(2)U34. This chain is tRNA-specific 2-thiouridylase MnmA, found in Paracidovorax citrulli (strain AAC00-1) (Acidovorax citrulli).